The primary structure comprises 314 residues: Nerylneryl diphosphate synthase CPT2, chloroplastic (314 aa).

The transit peptide at 1–61 (MNSSIVSQHF…MSDRGLSKIS (61 aa)) directs the protein to the chloroplast. Asp-97 is a catalytic residue.

The protein belongs to the UPP synthase family. Mg(2+) is required as a cofactor. In terms of tissue distribution, expressed in stems. Expressed in petiolules. Expressed at low levels in leaf trichomes, old leaf and roots.

The protein resides in the plastid. Its subcellular location is the chloroplast. The catalysed reaction is 3 isopentenyl diphosphate + dimethylallyl diphosphate = nerylneryl diphosphate + 3 diphosphate. It catalyses the reaction isopentenyl diphosphate + dimethylallyl diphosphate = neryl diphosphate + diphosphate. The enzyme catalyses neryl diphosphate + isopentenyl diphosphate = (2Z,6Z)-farnesyl diphosphate + diphosphate. It carries out the reaction (2Z,6Z)-farnesyl diphosphate + isopentenyl diphosphate = nerylneryl diphosphate + diphosphate. In terms of biological role, uses dimethylallyl diphosphate and isopentenyl diphosphate to catalyze the cis-prenyl chain elongation and produce the 20 carbon product nerylneryl diphosphate. This is Nerylneryl diphosphate synthase CPT2, chloroplastic from Solanum lycopersicum (Tomato).